A 772-amino-acid polypeptide reads, in one-letter code: 5-methyltetrahydropteroyltriglutamate--homocysteine methyltransferase (772 aa).

Residues 24-27 and Lys120 each bind 5-methyltetrahydropteroyltri-L-glutamate; that span reads RELK. The tract at residues 404 to 428 is disordered; the sequence is DPAVRSRTAATTDADARRSGPYPER. L-homocysteine is bound by residues 446 to 448 and Glu499; that span reads IGS. L-methionine is bound by residues 446 to 448 and Glu499; that span reads IGS. Residue Trp576 coordinates 5-methyltetrahydropteroyltri-L-glutamate. Asp614 contributes to the L-homocysteine binding site. Asp614 is a binding site for L-methionine. Residue Glu620 coordinates 5-methyltetrahydropteroyltri-L-glutamate. 3 residues coordinate Zn(2+): His656, Cys658, and Glu680. The Proton donor role is filled by His709. Cys741 provides a ligand contact to Zn(2+).

It belongs to the vitamin-B12 independent methionine synthase family. The cofactor is Zn(2+).

The enzyme catalyses 5-methyltetrahydropteroyltri-L-glutamate + L-homocysteine = tetrahydropteroyltri-L-glutamate + L-methionine. The protein operates within amino-acid biosynthesis; L-methionine biosynthesis via de novo pathway; L-methionine from L-homocysteine (MetE route): step 1/1. In terms of biological role, catalyzes the transfer of a methyl group from 5-methyltetrahydrofolate to homocysteine resulting in methionine formation. The sequence is that of 5-methyltetrahydropteroyltriglutamate--homocysteine methyltransferase from Streptomyces avermitilis (strain ATCC 31267 / DSM 46492 / JCM 5070 / NBRC 14893 / NCIMB 12804 / NRRL 8165 / MA-4680).